A 631-amino-acid polypeptide reads, in one-letter code: Chaperone protein HtpG (631 aa).

An a; substrate-binding region spans residues 1–339 (MSTNQETRGF…SNDLPLNVSR (339 aa)). The tract at residues 340-555 (EILQDNKVTS…DDQMTTQMAK (216 aa)) is b. A c region spans residues 556–631 (LFAAAGQAMP…NTLLSKLTSH (76 aa)).

Belongs to the heat shock protein 90 family. As to quaternary structure, homodimer.

It localises to the cytoplasm. Molecular chaperone. Has ATPase activity. This is Chaperone protein HtpG from Pasteurella multocida (strain Pm70).